A 121-amino-acid chain; its full sequence is NADH-quinone oxidoreductase subunit A 1 (121 aa).

3 consecutive transmembrane segments (helical) span residues 11–31 (IAIF…APFA), 65–85 (LVSI…PWAV), and 90–110 (MGWF…VGFI).

Belongs to the complex I subunit 3 family. NDH-1 is composed of 14 different subunits. Subunits NuoA, H, J, K, L, M, N constitute the membrane sector of the complex.

It localises to the cell inner membrane. It catalyses the reaction a quinone + NADH + 5 H(+)(in) = a quinol + NAD(+) + 4 H(+)(out). In terms of biological role, NDH-1 shuttles electrons from NADH, via FMN and iron-sulfur (Fe-S) centers, to quinones in the respiratory chain. The immediate electron acceptor for the enzyme in this species is believed to be ubiquinone. Couples the redox reaction to proton translocation (for every two electrons transferred, four hydrogen ions are translocated across the cytoplasmic membrane), and thus conserves the redox energy in a proton gradient. This Rhizobium meliloti (strain 1021) (Ensifer meliloti) protein is NADH-quinone oxidoreductase subunit A 1.